The following is a 478-amino-acid chain: MSPQTETKASVGFKAGVKDYKLTYYTPEYETKDTDILAAFRVTPQPGVPPEEAGAAVAAESSTGTWTTVWTDGLTSLDRYKGRCYHIEPVPGEEDQYICYVAYPLDLFEEGSVTNMFTSIVGNVFGFKALRALRLEDLRIPPTYSKTFQGPPHGIQVERDKLNKYGRPLLGCTIKPKLGLSAKNYGRACYECLRGGLDFTKDDENVNSQPFMRWRDRFVFCAEAIYKAQAETGEIKGHYLNATAGTCEEMMKRAIFARELGVPIVMHDYLTGGFTANTSLAMYCRDNGLLLHIHRAMHAVIDRQKNHGMHFRVLAKALRMSGGDHVHAGTVVGKLEGEREITLGFVDLLRDDFIEKDRSRGVFFTQDWVSMPGVIPVASGGIHVWHMPALTEIFGDDSVLQFGGGTLGHPWGNAPGAAANRVALEACVQARNEGRDLAREGNEIIKAACKWSPELAAACEVWKAIKFEFAPVDTVDKV.

Residues 1–2 (MS) constitute a propeptide that is removed on maturation. P3 is subject to N-acetylproline. The residue at position 14 (K14) is an N6,N6,N6-trimethyllysine. Residues N123 and T173 each coordinate substrate. K175 acts as the Proton acceptor in catalysis. Substrate is bound at residue K177. Mg(2+)-binding residues include K201, D203, and E204. K201 carries the N6-carboxylysine modification. The active-site Proton acceptor is H294. 3 residues coordinate substrate: R295, H327, and S379.

The protein belongs to the RuBisCO large chain family. Type I subfamily. As to quaternary structure, heterohexadecamer of 8 large chains and 8 small chains; disulfide-linked. The disulfide link is formed within the large subunit homodimers. The cofactor is Mg(2+). Post-translationally, the disulfide bond which can form in the large chain dimeric partners within the hexadecamer appears to be associated with oxidative stress and protein turnover.

It localises to the plastid. The protein resides in the chloroplast. It carries out the reaction 2 (2R)-3-phosphoglycerate + 2 H(+) = D-ribulose 1,5-bisphosphate + CO2 + H2O. The enzyme catalyses D-ribulose 1,5-bisphosphate + O2 = 2-phosphoglycolate + (2R)-3-phosphoglycerate + 2 H(+). In terms of biological role, ruBisCO catalyzes two reactions: the carboxylation of D-ribulose 1,5-bisphosphate, the primary event in carbon dioxide fixation, as well as the oxidative fragmentation of the pentose substrate in the photorespiration process. Both reactions occur simultaneously and in competition at the same active site. This is Ribulose bisphosphate carboxylase large chain from Neurachne tenuifolia.